Consider the following 262-residue polypeptide: Acyl-[acyl-carrier-protein]--UDP-N-acetylglucosamine O-acyltransferase (262 aa).

The protein belongs to the transferase hexapeptide repeat family. LpxA subfamily. In terms of assembly, homotrimer.

Its subcellular location is the cytoplasm. It carries out the reaction a (3R)-hydroxyacyl-[ACP] + UDP-N-acetyl-alpha-D-glucosamine = a UDP-3-O-[(3R)-3-hydroxyacyl]-N-acetyl-alpha-D-glucosamine + holo-[ACP]. Its pathway is glycolipid biosynthesis; lipid IV(A) biosynthesis; lipid IV(A) from (3R)-3-hydroxytetradecanoyl-[acyl-carrier-protein] and UDP-N-acetyl-alpha-D-glucosamine: step 1/6. In terms of biological role, involved in the biosynthesis of lipid A, a phosphorylated glycolipid that anchors the lipopolysaccharide to the outer membrane of the cell. The chain is Acyl-[acyl-carrier-protein]--UDP-N-acetylglucosamine O-acyltransferase from Histophilus somni (strain 2336) (Haemophilus somnus).